The primary structure comprises 361 residues: tRNA/tmRNA (uracil-C(5))-methyltransferase (361 aa).

The S-adenosyl-L-methionine site is built by Gln183, Tyr211, Asn216, Glu232, and Asp294. Cys319 functions as the Nucleophile in the catalytic mechanism. Glu353 serves as the catalytic Proton acceptor.

The protein belongs to the class I-like SAM-binding methyltransferase superfamily. RNA M5U methyltransferase family. TrmA subfamily.

It catalyses the reaction uridine(54) in tRNA + S-adenosyl-L-methionine = 5-methyluridine(54) in tRNA + S-adenosyl-L-homocysteine + H(+). The catalysed reaction is uridine(341) in tmRNA + S-adenosyl-L-methionine = 5-methyluridine(341) in tmRNA + S-adenosyl-L-homocysteine + H(+). Its function is as follows. Dual-specificity methyltransferase that catalyzes the formation of 5-methyluridine at position 54 (m5U54) in all tRNAs, and that of position 341 (m5U341) in tmRNA (transfer-mRNA). This Acinetobacter baylyi (strain ATCC 33305 / BD413 / ADP1) protein is tRNA/tmRNA (uracil-C(5))-methyltransferase.